The following is a 371-amino-acid chain: Aminomethyltransferase (371 aa).

The protein belongs to the GcvT family. As to quaternary structure, the glycine cleavage system is composed of four proteins: P, T, L and H.

It catalyses the reaction N(6)-[(R)-S(8)-aminomethyldihydrolipoyl]-L-lysyl-[protein] + (6S)-5,6,7,8-tetrahydrofolate = N(6)-[(R)-dihydrolipoyl]-L-lysyl-[protein] + (6R)-5,10-methylene-5,6,7,8-tetrahydrofolate + NH4(+). The glycine cleavage system catalyzes the degradation of glycine. The sequence is that of Aminomethyltransferase from Nitrosococcus oceani (strain ATCC 19707 / BCRC 17464 / JCM 30415 / NCIMB 11848 / C-107).